Reading from the N-terminus, the 159-residue chain is NAD(P)H-quinone oxidoreductase subunit J, chloroplastic (159 aa).

Belongs to the complex I 30 kDa subunit family. As to quaternary structure, NDH is composed of at least 16 different subunits, 5 of which are encoded in the nucleus. As to expression, leaves.

It localises to the plastid. The protein localises to the chloroplast thylakoid membrane. It carries out the reaction a plastoquinone + NADH + (n+1) H(+)(in) = a plastoquinol + NAD(+) + n H(+)(out). The catalysed reaction is a plastoquinone + NADPH + (n+1) H(+)(in) = a plastoquinol + NADP(+) + n H(+)(out). In terms of biological role, NDH shuttles electrons from NAD(P)H:plastoquinone, via FMN and iron-sulfur (Fe-S) centers, to quinones in the photosynthetic chain and possibly in a chloroplast respiratory chain. The immediate electron acceptor for the enzyme in this species is believed to be plastoquinone. Couples the redox reaction to proton translocation, and thus conserves the redox energy in a proton gradient. This Zea mays (Maize) protein is NAD(P)H-quinone oxidoreductase subunit J, chloroplastic.